Here is a 202-residue protein sequence, read N- to C-terminus: Small ribosomal subunit protein uS2 (202 aa).

It belongs to the universal ribosomal protein uS2 family.

The sequence is that of Small ribosomal subunit protein uS2 (rps2) from Pyrococcus horikoshii (strain ATCC 700860 / DSM 12428 / JCM 9974 / NBRC 100139 / OT-3).